Here is a 141-residue protein sequence, read N- to C-terminus: Small ribosomal subunit protein uS12 (141 aa).

The protein belongs to the universal ribosomal protein uS12 family. Part of the 30S ribosomal subunit.

Its function is as follows. With S4 and S5 plays an important role in translational accuracy. Located at the interface of the 30S and 50S subunits. This is Small ribosomal subunit protein uS12 from Methanobrevibacter smithii (strain ATCC 35061 / DSM 861 / OCM 144 / PS).